We begin with the raw amino-acid sequence, 315 residues long: Glycine--tRNA ligase alpha subunit (315 aa).

It belongs to the class-II aminoacyl-tRNA synthetase family. In terms of assembly, tetramer of two alpha and two beta subunits.

The protein localises to the cytoplasm. It carries out the reaction tRNA(Gly) + glycine + ATP = glycyl-tRNA(Gly) + AMP + diphosphate. The chain is Glycine--tRNA ligase alpha subunit from Pseudomonas syringae pv. tomato (strain ATCC BAA-871 / DC3000).